The sequence spans 216 residues: Thiopurine S-methyltransferase (216 aa).

4 residues coordinate S-adenosyl-L-methionine: Trp-11, Leu-46, Glu-67, and Arg-122.

The protein belongs to the class I-like SAM-binding methyltransferase superfamily. TPMT family.

Its subcellular location is the cytoplasm. The enzyme catalyses S-adenosyl-L-methionine + a thiopurine = S-adenosyl-L-homocysteine + a thiopurine S-methylether.. This Vibrio campbellii (strain ATCC BAA-1116) protein is Thiopurine S-methyltransferase.